The sequence spans 334 residues: 4-hydroxyproline 2-epimerase (334 aa).

Residue Cys-90 is the Proton acceptor of the active site. Residues 91 to 92 (GH), His-223, and Asp-249 contribute to the substrate site. Cys-253 acts as the Proton donor in catalysis. Residue 254-255 (GT) coordinates substrate.

This sequence belongs to the proline racemase family. Homodimer.

It catalyses the reaction trans-4-hydroxy-L-proline = cis-4-hydroxy-D-proline. Functionally, catalyzes the epimerization of trans-4-hydroxy-L-proline (t4LHyp) to cis-4-hydroxy-D-proline (c4DHyp). Is likely involved in a degradation pathway that converts t4LHyp to alpha-ketoglutarate, which would allow P.denitrificans to grow on t4LHyp as a sole carbon source. Also seems to be involved in an alternative catabolic pathway that degrades trans-4-hydroxy-L-proline betaine (tHyp-B) to alpha-ketoglutarate; this pathway would permit the utilization of tHyp-B as a sole carbon and nitrogen source. The chain is 4-hydroxyproline 2-epimerase (hypF) from Paracoccus denitrificans (strain Pd 1222).